Reading from the N-terminus, the 111-residue chain is Large ribosomal subunit protein uL22 (111 aa).

The protein belongs to the universal ribosomal protein uL22 family. Part of the 50S ribosomal subunit.

In terms of biological role, this protein binds specifically to 23S rRNA; its binding is stimulated by other ribosomal proteins, e.g. L4, L17, and L20. It is important during the early stages of 50S assembly. It makes multiple contacts with different domains of the 23S rRNA in the assembled 50S subunit and ribosome. Its function is as follows. The globular domain of the protein is located near the polypeptide exit tunnel on the outside of the subunit, while an extended beta-hairpin is found that lines the wall of the exit tunnel in the center of the 70S ribosome. The chain is Large ribosomal subunit protein uL22 from Thermoanaerobacter pseudethanolicus (strain ATCC 33223 / 39E) (Clostridium thermohydrosulfuricum).